The sequence spans 1267 residues: Probable ATP-dependent RNA helicase DHR1 (1267 aa).

Disordered stretches follow at residues 1–67, 168–233, and 255–313; these read MGTY…EPLT, YEPK…SNIK, and EELK…DQND. Basic and acidic residues-rich tracts occupy residues 7–25 and 32–43; these read RFNE…ELKR and TRQDENDERVEN. The span at 175–192 shows a compositional bias: acidic residues; that stretch reads EYGEGGSSEDDDGEDDFE. Residue serine 181 is modified to Phosphoserine. The segment covering 202 to 217 has biased composition (basic and acidic residues); it reads TDNEEKKSSGFIDHRP. Residues 264-284 are compositionally biased toward acidic residues; sequence DEMDFDTTSEDDDEEEDQEEE. The Helicase ATP-binding domain maps to 401 to 580; sequence MEAIHHNDVV…KTLFPIAPPV (180 aa). Position 414–421 (414–421) interacts with ATP; that stretch reads GETGSGKT. A DEAH box motif is present at residues 516 to 519; the sequence is DEAH. Residues 675 to 858 form the Helicase C-terminal domain; the sequence is DIDFSVQVID…SIVLQMKSMA (184 aa). Disordered regions lie at residues 693–720 and 955–976; these read RYEE…EVLT and PNPD…PGMD. Over residues 695-719 the composition is skewed to acidic residues; it reads EEDEGNSGNGEDEEDEEEEGFEEVL.

It belongs to the DEAD box helicase family. DEAH subfamily. As to quaternary structure, interacts with snoRNA U3. Component of the ribosomal small subunit (SSU) processome composed of at least 40 protein subunits and snoRNA U3.

The protein resides in the nucleus. Its subcellular location is the nucleolus. The catalysed reaction is ATP + H2O = ADP + phosphate + H(+). Probable ATP-binding RNA helicase. Required for 18S rRNA synthesis. May play a role in restructuring of the pre-rRNA. This Saccharomyces cerevisiae (strain ATCC 204508 / S288c) (Baker's yeast) protein is Probable ATP-dependent RNA helicase DHR1 (ECM16).